The sequence spans 495 residues: 4-aminobutyrate aminotransferase (495 aa).

Pyridoxal 5'-phosphate is bound at residue 160–161; sequence GS. Arg216 contacts substrate. Lys350 is modified (N6-(pyridoxal phosphate)lysine). Thr374 contacts pyridoxal 5'-phosphate.

This sequence belongs to the class-III pyridoxal-phosphate-dependent aminotransferase family. As to quaternary structure, homodimer. Pyridoxal 5'-phosphate is required as a cofactor.

The enzyme catalyses 4-aminobutanoate + 2-oxoglutarate = succinate semialdehyde + L-glutamate. The protein is 4-aminobutyrate aminotransferase (gabT) of Dictyostelium discoideum (Social amoeba).